A 39-amino-acid polypeptide reads, in one-letter code: Colipase (39 aa).

2 disulfides stabilise this stretch: cysteine 16-cysteine 27 and cysteine 22-cysteine 38.

Belongs to the colipase family. As to quaternary structure, forms a 1:1 stoichiometric complex with pancreatic lipase. In terms of tissue distribution, expressed by the pancreas.

It is found in the secreted. Colipase is a cofactor of pancreatic lipase. It allows the lipase to anchor itself to the lipid-water interface. Without colipase the enzyme is washed off by bile salts, which have an inhibitory effect on the lipase. In Squalus acanthias (Spiny dogfish), this protein is Colipase.